A 356-amino-acid polypeptide reads, in one-letter code: Protein HEXIM1 (356 aa).

2 stretches are compositionally biased toward basic and acidic residues: residues 1-11 (MAEPLLSEHQH) and 24-47 (VHEEQNSERPPSAEERVPKEDSRW). A disordered region spans residues 1–160 (MAEPLLSEHQ…RRRPSKKKRH (160 aa)). The span at 48–58 (QSRASLQSGSR) shows a compositional bias: polar residues. The segment covering 84–93 (CLEKGEKGQN) has biased composition (basic and acidic residues). Phosphoserine is present on residues Ser98 and Ser103. Residues 145 to 160 (LGKKKHRRRPSKKKRH) show a composition bias toward basic residues. The tract at residues 147 to 174 (KKKHRRRPSKKKRHWKPYYKLTWEEKKK) is basic region; mediates nuclear localization and interaction with 7SK snRNA and NR3C1. Positions 199–202 (PYNT) are interaction with P-TEFb. The interval 207–247 (MDDHDQEEPDLKTGLYPKRAAAKSDDTSDEDFVEEAGEEDG) is autoinhibitory acidic region; in absence of 7SK snRNA interacts with the basic region preventing interaction with P-TEFb and modulating subcellular localization. The interval 209-259 (DHDQEEPDLKTGLYPKRAAAKSDDTSDEDFVEEAGEEDGGSDGMGGDGSEF) is disordered. Ser230 is modified (phosphoserine). At Thr233 the chain carries Phosphothreonine. Acidic residues predominate over residues 233–248 (TSDEDFVEEAGEEDGG). Phosphoserine is present on residues Ser234, Ser249, and Ser257. Positions 280 to 346 (SKQELIKEYL…LTENELHRQQ (67 aa)) form a coiled coil. Positions 283 to 311 (ELIKEYLELEKCLSRKEDENNRLRLESKR) are mediates interaction with CCNT1. The required for inhibition of ESR1-dependent transcription stretch occupies residues 307-352 (LESKRLGGVDARVRELELELDRLRAENRQLLTENELHRQQERAPPS). The interval 337–356 (LTENELHRQQERAPPSKFGD) is disordered.

It belongs to the HEXIM family. In terms of assembly, homooligomer and heterooligomer with HEXIM2; probably dimeric. Core component of the 7SK RNP complex, at least composed of 7SK RNA, LARP7, MEPCE, HEXIM1 (or HEXIM2) and P-TEFb (composed of CDK9 and CCNT1/cyclin-T1). Interacts with the N-CoR complex through NCOR1. Interacts with ESR1 and NR3C1. May interact with NF-kappa-B through RELA. Interacts with CCNT2; mediates formation of a tripartite complex with KPNA2. Part of the HDP-RNP complex composed of at least HEXIM1, PRKDC, XRCC5, XRCC6, paraspeckle proteins (SFPQ, NONO, PSPC1, RBM14, and MATR3) and NEAT1 non-coding RNA.

Its subcellular location is the nucleus. It localises to the cytoplasm. Transcriptional regulator which functions as a general RNA polymerase II transcription inhibitor. Core component of the 7SK RNP complex: in cooperation with 7SK snRNA sequesters P-TEFb in a large inactive 7SK snRNP complex preventing RNA polymerase II phosphorylation and subsequent transcriptional elongation. May also regulate NF-kappa-B, ESR1, NR3C1 and CIITA-dependent transcriptional activity. Plays a role in the regulation of DNA virus-mediated innate immune response by assembling into the HDP-RNP complex, a complex that serves as a platform for IRF3 phosphorylation and subsequent innate immune response activation through the cGAS-STING pathway. In Rattus norvegicus (Rat), this protein is Protein HEXIM1 (Hexim1).